Consider the following 388-residue polypeptide: Succinate--CoA ligase [ADP-forming] subunit beta (388 aa).

The 236-residue stretch at 9 to 244 (KQLFAEYGLP…PSQEDSREAH (236 aa)) folds into the ATP-grasp domain. ATP is bound by residues Lys46, 53–55 (GRG), Glu99, Thr102, and Glu107. Asn199 and Asp213 together coordinate Mg(2+). Substrate-binding positions include Asn264 and 321-323 (GIV).

It belongs to the succinate/malate CoA ligase beta subunit family. As to quaternary structure, heterotetramer of two alpha and two beta subunits. It depends on Mg(2+) as a cofactor.

It carries out the reaction succinate + ATP + CoA = succinyl-CoA + ADP + phosphate. The catalysed reaction is GTP + succinate + CoA = succinyl-CoA + GDP + phosphate. It participates in carbohydrate metabolism; tricarboxylic acid cycle; succinate from succinyl-CoA (ligase route): step 1/1. Its function is as follows. Succinyl-CoA synthetase functions in the citric acid cycle (TCA), coupling the hydrolysis of succinyl-CoA to the synthesis of either ATP or GTP and thus represents the only step of substrate-level phosphorylation in the TCA. The beta subunit provides nucleotide specificity of the enzyme and binds the substrate succinate, while the binding sites for coenzyme A and phosphate are found in the alpha subunit. The polypeptide is Succinate--CoA ligase [ADP-forming] subunit beta (Pseudoalteromonas translucida (strain TAC 125)).